A 1466-amino-acid polypeptide reads, in one-letter code: ABC transporter C family member 6 (1466 aa).

10 helical membrane-spanning segments follow: residues 16 to 36 (SVLS…SWLF), 63 to 83 (LVLI…LLSC), 91 to 111 (WPFL…VYLF), 128 to 148 (VWWV…FVLY), 158 to 178 (FVIS…SCLW), 286 to 306 (IVLS…APYL), 322 to 339 (NQGY…LVEC), 400 to 420 (WFMH…WILY), 425 to 445 (LGSI…YPFA), and 512 to 532 (SVLW…CLLL). Residues 286-567 (IVLSALLAFV…LPETISMIVQ (282 aa)) enclose the ABC transmembrane type-1 1 domain. The 224-residue stretch at 601–824 (VEISNGTFSW…GTDFMELVGA (224 aa)) folds into the ABC transporter 1 domain. An ATP-binding site is contributed by 636 to 643 (GTVGSGKS). Residues 840–876 (ASEKSTTDKENEVLHHKEKQENGSDNKPSGQLVQEEE) form a disordered region. The segment covering 844-863 (STTDKENEVLHHKEKQENGS) has biased composition (basic and acidic residues). 3 helical membrane passes run 890–910 (YMAL…QVLF), 937–957 (GFTL…CILI), and 1026–1046 (ILGI…VFIP). Residues 900–1182 (IPLILVVQVL…LIWTLCDLEN (283 aa)) enclose the ABC transmembrane type-1 2 domain. The ABC transporter 2 domain occupies 1219 to 1453 (ITICNLQVRY…RSSLFSKLVA (235 aa)). 1253–1260 (GRTGCGKS) contacts ATP.

This sequence belongs to the ABC transporter superfamily. ABCC family. Conjugate transporter (TC 3.A.1.208) subfamily. As to expression, ubiquitous.

Its subcellular location is the membrane. The catalysed reaction is ATP + H2O + xenobioticSide 1 = ADP + phosphate + xenobioticSide 2.. Functionally, pump for glutathione S-conjugates. This Arabidopsis thaliana (Mouse-ear cress) protein is ABC transporter C family member 6 (ABCC6).